We begin with the raw amino-acid sequence, 444 residues long: L-seryl-tRNA(Sec) selenium transferase (444 aa).

Lys284 bears the N6-(pyridoxal phosphate)lysine mark.

The protein belongs to the SelA family. It depends on pyridoxal 5'-phosphate as a cofactor.

It is found in the cytoplasm. The enzyme catalyses L-seryl-tRNA(Sec) + selenophosphate + H(+) = L-selenocysteinyl-tRNA(Sec) + phosphate. It functions in the pathway aminoacyl-tRNA biosynthesis; selenocysteinyl-tRNA(Sec) biosynthesis; selenocysteinyl-tRNA(Sec) from L-seryl-tRNA(Sec) (bacterial route): step 1/1. Functionally, converts seryl-tRNA(Sec) to selenocysteinyl-tRNA(Sec) required for selenoprotein biosynthesis. In Wolinella succinogenes (strain ATCC 29543 / DSM 1740 / CCUG 13145 / JCM 31913 / LMG 7466 / NCTC 11488 / FDC 602W) (Vibrio succinogenes), this protein is L-seryl-tRNA(Sec) selenium transferase.